Consider the following 1074-residue polypeptide: BRD4-interacting chromatin-remodeling complex-associated protein-like (1074 aa).

Disordered regions lie at residues 542–603 (AVSS…NTPG), 620–689 (TSPI…GQKR), 834–874 (TPLD…HDQF), and 887–952 (GNIS…SKLP). Composition is skewed to polar residues over residues 544–576 (SSAS…QANR), 591–603 (ASKS…NTPG), 620–629 (TSPIPTSKTT), and 660–680 (GATQ…TAVQ). S621 bears the Phosphoserine mark. Composition is skewed to basic and acidic residues over residues 889–904 (ISKK…KFDR), 913–925 (PPED…DPAK), and 934–948 (EGHR…HGSE). At S976 the chain carries Phosphoserine.

As to quaternary structure, component of the multiprotein chromatin-remodeling complexes SWI/SNF: SWI/SNF-A (BAF), SWI/SNF-B (PBAF) and related complexes. The canonical complex contains a catalytic subunit (either SMARCA4/BRG1/BAF190A or SMARCA2/BRM/BAF190B) and at least SMARCE1, ACTL6A/BAF53, SMARCC1/BAF155, SMARCC2/BAF170, and SMARCB1/SNF5/BAF47. Other subunits specific to each of the complexes may also be present permitting several possible combinations developmentally and tissue specific. Component of the SWI/SNF (GBAF) subcomplex, which includes at least BICRA or BICRAL (mutually exclusive), BRD9, SS18, the core BAF subunits, SMARCA2/BRM, SMARCA4/BRG1/BAF190A, ACTL6A/BAF53, SMARCC1/BAF155, and SMARCD1/BAF60A.

In terms of biological role, component of SWI/SNF chromatin remodeling subcomplex GBAF that carries out key enzymatic activities, changing chromatin structure by altering DNA-histone contacts within a nucleosome in an ATP-dependent manner. The polypeptide is BRD4-interacting chromatin-remodeling complex-associated protein-like (Mus musculus (Mouse)).